A 166-amino-acid polypeptide reads, in one-letter code: NAD(P)H-quinone oxidoreductase subunit I, chloroplastic (166 aa).

4Fe-4S ferredoxin-type domains lie at 55–84 and 95–124; these read GRIH…VDWK and LNYS…MTEE. [4Fe-4S] cluster is bound by residues C64, C67, C70, C74, C104, C107, C110, and C114.

It belongs to the complex I 23 kDa subunit family. In terms of assembly, NDH is composed of at least 16 different subunits, 5 of which are encoded in the nucleus. [4Fe-4S] cluster is required as a cofactor.

It is found in the plastid. The protein localises to the chloroplast thylakoid membrane. The enzyme catalyses a plastoquinone + NADH + (n+1) H(+)(in) = a plastoquinol + NAD(+) + n H(+)(out). The catalysed reaction is a plastoquinone + NADPH + (n+1) H(+)(in) = a plastoquinol + NADP(+) + n H(+)(out). Its function is as follows. NDH shuttles electrons from NAD(P)H:plastoquinone, via FMN and iron-sulfur (Fe-S) centers, to quinones in the photosynthetic chain and possibly in a chloroplast respiratory chain. The immediate electron acceptor for the enzyme in this species is believed to be plastoquinone. Couples the redox reaction to proton translocation, and thus conserves the redox energy in a proton gradient. In Chaenactis santolinoides (Santolina pincushion), this protein is NAD(P)H-quinone oxidoreductase subunit I, chloroplastic.